A 239-amino-acid polypeptide reads, in one-letter code: Endolytic peptidoglycan transglycosylase RlpA (239 aa).

The signal sequence occupies residues 1-25; it reads MTLTRKTLFLLTAAFGIHSFQTASA. One can recognise an SPOR domain in the interval 160 to 239; the sequence is VAENKDIFID…GMVRAVLTAG (80 aa).

It belongs to the RlpA family.

In terms of biological role, lytic transglycosylase with a strong preference for naked glycan strands that lack stem peptides. This Neisseria meningitidis serogroup A / serotype 4A (strain DSM 15465 / Z2491) protein is Endolytic peptidoglycan transglycosylase RlpA.